Consider the following 346-residue polypeptide: 4-hydroxy-2-oxovalerate aldolase (346 aa).

A Pyruvate carboxyltransferase domain is found at 8 to 260 (VILHDMSLRD…ETGIDLYKIM (253 aa)). Position 16–17 (16–17 (RD)) interacts with substrate. D17 contacts Mn(2+). H20 (proton acceptor) is an active-site residue. Positions 170 and 199 each coordinate substrate. 2 residues coordinate Mn(2+): H199 and H201. Y290 is a substrate binding site.

It belongs to the 4-hydroxy-2-oxovalerate aldolase family.

The catalysed reaction is (S)-4-hydroxy-2-oxopentanoate = acetaldehyde + pyruvate. The protein operates within aromatic compound metabolism; naphthalene degradation. The polypeptide is 4-hydroxy-2-oxovalerate aldolase (nahM) (Pseudomonas putida (Arthrobacter siderocapsulatus)).